The sequence spans 1017 residues: DNA polymerase (1017 aa).

It belongs to the DNA polymerase type-B family. As to quaternary structure, heterodimer with the terminal protein; this heterodimer binds to bp 9 to 18 of the genome. Forms a complex with viral pTP, DBP and hosts NFIA and POU2F1/OCT1 for initiation of replication.

Its subcellular location is the host nucleus. It carries out the reaction DNA(n) + a 2'-deoxyribonucleoside 5'-triphosphate = DNA(n+1) + diphosphate. Functionally, eukaryotic-type DNA polymerase involved in viral genomic replication. DNA synthesis is protein primed, and acts in a strand displacement replication. Assembles in complex with viral pTP, DBP, host NFIA and host POU2F1/OCT1 on viral origin of replication. The polymerase covalently transfers dCMP onto pTP, thereby initiating complementary strand synthesis. This is DNA polymerase from Bovine adenovirus 2 (BAdV-2).